Reading from the N-terminus, the 132-residue chain is MCDAFVGTWKLVSSENFDDYMKEVGVGFATRKVAGMAKPNMIISVNGDLVTIRSESTFKNTEISFKLGVEFDEITADDRKVKSIITLDGGALVQVQKWDGKSTTIKRKRDGDKLVVECVMKGVTSTRVYERA.

The residue at position 2 (Cys-2) is an N-acetylcysteine. A Phosphoserine modification is found at Ser-13. Tyr-20 is subject to Phosphotyrosine; by Tyr-kinases. The short motif at Lys-22–Lys-32 is the Nuclear localization signal element. Arg-127–Tyr-129 is a binding site for a fatty acid.

This sequence belongs to the calycin superfamily. Fatty-acid binding protein (FABP) family. In terms of assembly, monomer. Homodimer. Interacts with PPARG.

It localises to the cytoplasm. It is found in the nucleus. Its function is as follows. Lipid transport protein in adipocytes. Binds both long chain fatty acids and retinoic acid. Delivers long-chain fatty acids and retinoic acid to their cognate receptors in the nucleus. This Mus musculus (Mouse) protein is Fatty acid-binding protein, adipocyte (Fabp4).